A 520-amino-acid polypeptide reads, in one-letter code: Peptidoglycan-recognition protein LC (520 aa).

2 stretches are compositionally biased toward polar residues: residues 1-14 (MPFSNETEMSQCSN) and 27-36 (KNCSTSSTDS). Disordered stretches follow at residues 1–78 (MPFS…RISV) and 239–278 (DKWKPGEGPAGGQDNPAFNGGPSTNGSAPGSKHEDPAQTP). At 1 to 291 (MPFSNETEMS…PFLPNTVGRK (291 aa)) the chain is on the cytoplasmic side. Basic and acidic residues-rich tracts occupy residues 48–58 (RPEKETKDRGT) and 66–78 (KSEEKTESKRISV). A helical; Signal-anchor for type II membrane protein transmembrane segment spans residues 292–312 (AVTVTVVFVTLTFLLGIVLAT). Residues 313–520 (TTNLFGKTLN…ASFANWTHWS (208 aa)) are Extracellular-facing. Asn389 is a glycosylation site (N-linked (GlcNAc...) asparagine). An intrachain disulfide couples Cys390 to Cys396. One can recognise an N-acetylmuramoyl-L-alanine amidase domain in the interval 412-490 (QKCDIAYNFL…KLGKIAPSYR (79 aa)). The N-linked (GlcNAc...) asparagine glycan is linked to Asn515.

It belongs to the N-acetylmuramoyl-L-alanine amidase 2 family. Post-translationally, proteolytically cleaved, probably by a metaloprotease such as Mmp2; proteolytic cleavage leads to activation of the imd/Relish signaling pathway. As to expression, expressed in the fat body and hemocytes.

The protein localises to the membrane. With respect to regulation, activated by proteolytic cleavage in response to Gram-negative bacterial infection; cleavage may be mediated by endogenous proteases, such as the metalloprotease Mmp2 or elastase, or by bacterially expressed proteases such as the surface serine protease OmpT. Major activator of the imd/Relish pathway and is likely to encode a pattern recognition molecule for the humoral immune response. Required for Relish processing and nuclear translocation following proteolytic cleavage. Involved in the response to lipopolysaccharide (LPS) and peptidoglycan of Gram-negative bacteria. The different isoforms probably display different recognition capabilities to various microbial patterns. Its function is as follows. Mediates the response to LPS and Gram-negative bacteria. Functionally, mediates the response to LPS, peptidoglycan and Gram-negative bacteria. The chain is Peptidoglycan-recognition protein LC (PGRP-LC) from Drosophila melanogaster (Fruit fly).